A 215-amino-acid chain; its full sequence is uncharacterized protein (215 aa).

The helical transmembrane segment at 98–119 threads the bilayer; it reads AAALAVAVASLCVCTLLLTHIV.

The protein resides in the membrane. This is an uncharacterized protein from Treponema pallidum (strain Nichols).